Here is a 384-residue protein sequence, read N- to C-terminus: S-adenosylmethionine synthase (384 aa).

Histidine 15 provides a ligand contact to ATP. Aspartate 17 contributes to the Mg(2+) binding site. Glutamate 43 is a K(+) binding site. L-methionine is bound by residues glutamate 56 and glutamine 99. The segment at 99–109 is flexible loop; it reads QSPDINQGVDR. ATP contacts are provided by residues 164 to 166, 231 to 232, aspartate 240, 246 to 247, alanine 263, and lysine 267; these read DAK, RF, and RK. Residue aspartate 240 participates in L-methionine binding. Lysine 271 lines the L-methionine pocket.

The protein belongs to the AdoMet synthase family. In terms of assembly, homotetramer; dimer of dimers. Mg(2+) serves as cofactor. Requires K(+) as cofactor.

It is found in the cytoplasm. The enzyme catalyses L-methionine + ATP + H2O = S-adenosyl-L-methionine + phosphate + diphosphate. It functions in the pathway amino-acid biosynthesis; S-adenosyl-L-methionine biosynthesis; S-adenosyl-L-methionine from L-methionine: step 1/1. Catalyzes the formation of S-adenosylmethionine (AdoMet) from methionine and ATP. The overall synthetic reaction is composed of two sequential steps, AdoMet formation and the subsequent tripolyphosphate hydrolysis which occurs prior to release of AdoMet from the enzyme. The polypeptide is S-adenosylmethionine synthase (Shewanella pealeana (strain ATCC 700345 / ANG-SQ1)).